Here is a 611-residue protein sequence, read N- to C-terminus: Dihydroxy-acid dehydratase (611 aa).

Aspartate 81 is a binding site for Mg(2+). [2Fe-2S] cluster is bound at residue cysteine 122. Mg(2+) contacts are provided by aspartate 123 and lysine 124. An N6-carboxylysine modification is found at lysine 124. [2Fe-2S] cluster is bound at residue cysteine 195. Residue glutamate 491 participates in Mg(2+) binding. Catalysis depends on serine 517, which acts as the Proton acceptor.

This sequence belongs to the IlvD/Edd family. In terms of assembly, homodimer. [2Fe-2S] cluster serves as cofactor. It depends on Mg(2+) as a cofactor.

It carries out the reaction (2R)-2,3-dihydroxy-3-methylbutanoate = 3-methyl-2-oxobutanoate + H2O. It catalyses the reaction (2R,3R)-2,3-dihydroxy-3-methylpentanoate = (S)-3-methyl-2-oxopentanoate + H2O. The protein operates within amino-acid biosynthesis; L-isoleucine biosynthesis; L-isoleucine from 2-oxobutanoate: step 3/4. Its pathway is amino-acid biosynthesis; L-valine biosynthesis; L-valine from pyruvate: step 3/4. Functions in the biosynthesis of branched-chain amino acids. Catalyzes the dehydration of (2R,3R)-2,3-dihydroxy-3-methylpentanoate (2,3-dihydroxy-3-methylvalerate) into 2-oxo-3-methylpentanoate (2-oxo-3-methylvalerate) and of (2R)-2,3-dihydroxy-3-methylbutanoate (2,3-dihydroxyisovalerate) into 2-oxo-3-methylbutanoate (2-oxoisovalerate), the penultimate precursor to L-isoleucine and L-valine, respectively. This chain is Dihydroxy-acid dehydratase, found in Brucella suis (strain ATCC 23445 / NCTC 10510).